A 506-amino-acid chain; its full sequence is Aerotaxis receptor (506 aa).

Residues 1–166 lie on the Cytoplasmic side of the membrane; that stretch reads MSSHPYVTQQ…PSLPLRWRAR (166 aa). Residues 167 to 186 traverse the membrane as a helical segment; that stretch reads GVMTLMFILLAAMLWFVAAP. Over 187-190 the chain is Periplasmic; it reads VVTY. The helical transmembrane segment at 191–209 threads the bilayer; sequence ILCALVVLLASACFEWQIV. The Cytoplasmic segment spans residues 210 to 506; it reads RPIENVAHQA…RLEDAVTVLH (297 aa). A Methyl-accepting transducer domain is found at 263 to 492; sequence QVSSVRNGSE…ESAQVSAMVK (230 aa).

This sequence belongs to the methyl-accepting chemotaxis (MCP) protein family.

It is found in the cell inner membrane. Functionally, signal transducer for aerotaxis. The aerotactic response is the accumulation of cells around air bubbles. The nature of the sensory stimulus detected by this protein is the proton motive force or cellular redox state. It uses a FAD prosthetic group as a redox sensor to monitor oxygen levels. This Escherichia coli (strain K12) protein is Aerotaxis receptor (aer).